We begin with the raw amino-acid sequence, 690 residues long: Glutamate--cysteine ligase (690 aa).

2 stretches are compositionally biased toward low complexity: residues 574–585 (QQQNGHVNNNNN) and 598–619 (NGST…TNGT). The interval 574 to 620 (QQQNGHVNNNNNNDKKTKNDPIIVNGSTTTTNGTNSGSGITETNGTM) is disordered.

Belongs to the glutamate--cysteine ligase type 3 family.

The enzyme catalyses L-cysteine + L-glutamate + ATP = gamma-L-glutamyl-L-cysteine + ADP + phosphate + H(+). It participates in sulfur metabolism; glutathione biosynthesis; glutathione from L-cysteine and L-glutamate: step 1/2. In Candida albicans (Yeast), this protein is Glutamate--cysteine ligase (GCS1).